Consider the following 432-residue polypeptide: Peptidase B (432 aa).

Mn(2+) is bound by residues lysine 196 and aspartate 201. Residue lysine 208 is part of the active site. Residues aspartate 219, aspartate 278, and glutamate 280 each coordinate Mn(2+). Arginine 282 is a catalytic residue.

This sequence belongs to the peptidase M17 family. Homohexamer. The cofactor is Mn(2+).

It localises to the cytoplasm. The enzyme catalyses Release of an N-terminal amino acid, Xaa, from a peptide or arylamide. Xaa is preferably Glu or Asp but may be other amino acids, including Leu, Met, His, Cys and Gln.. In terms of biological role, probably plays an important role in intracellular peptide degradation. The polypeptide is Peptidase B (Vibrio parahaemolyticus serotype O3:K6 (strain RIMD 2210633)).